We begin with the raw amino-acid sequence, 65 residues long: Small ribosomal subunit protein bS21 (65 aa).

The protein belongs to the bacterial ribosomal protein bS21 family.

The protein is Small ribosomal subunit protein bS21 of Geobacter sp. (strain M21).